Reading from the N-terminus, the 344-residue chain is MDKFRMLFQHFQSSSESVMNGICLLLAAVTVKLYSSFDFNCPCLVHYNALYGLGLLLTPPLALFLCGLLANRQSVVMVEEWRRPAGHRRKDPGIIRYMCSSVLQRALAAPLVWILLALLDGKCFVCAFSSSVDPEKFLDFANMTPSQVQLFLAKVPCKEDELVRDSPARKAVSRYLRCLSQAIGWSVTLLLIIAAFLARCLRPCFDQTVFLQRRYWSNYVDLEQKLFDETCCEHARDFAHRCVLHFFASMRSELQARGLRRGNAGRRLELPAVPEPPEGLDSGSGKAHLRAISSREQVDRLLSTWYSSKPPLDLAASPGLCGGGLSHRAPTLALGTRLSQHTDV.

At 1–20 the chain is on the cytoplasmic side; that stretch reads MDKFRMLFQHFQSSSESVMN. Positions 9 to 36 are central pore; the sequence is QHFQSSSESVMNGICLLLAAVTVKLYSS. The helical transmembrane segment at 21–36 threads the bilayer; sequence GICLLLAAVTVKLYSS. At 37-48 the chain is on the extracellular side; that stretch reads FDFNCPCLVHYN. 2 cysteine pairs are disulfide-bonded: C41/C126 and C43/C157. Residues 49-71 form a helical membrane-spanning segment; the sequence is ALYGLGLLLTPPLALFLCGLLAN. Residues 72–98 are Cytoplasmic-facing; that stretch reads RQSVVMVEEWRRPAGHRRKDPGIIRYM. C99 carries S-palmitoyl cysteine lipidation. Residues 99–124 traverse the membrane as a helical segment; it reads CSSVLQRALAAPLVWILLALLDGKCF. The Extracellular segment spans residues 125–176; that stretch reads VCAFSSSVDPEKFLDFANMTPSQVQLFLAKVPCKEDELVRDSPARKAVSRYL. N-linked (GlcNAc...) asparagine glycosylation occurs at N142. Residues 177-202 traverse the membrane as a helical segment; the sequence is RCLSQAIGWSVTLLLIIAAFLARCLR. S-palmitoyl cysteine attachment occurs at residues C200 and C204. Topologically, residues 203–344 are cytoplasmic; sequence PCFDQTVFLQ…GTRLSQHTDV (142 aa).

The protein belongs to the CALHM family. In terms of assembly, associates with CALHM1 as a pore-forming subunit in a hetero-hexameric channel complex. Post-translationally, N-glycosylated. Palmitoylated by ZDHHC3 and ZDHHC15. Palmitoylation positively regulates CALHM1:CALHM3 channel conductance. As to expression, specifically expressed in circumvallate taste bud cells.

It is found in the basolateral cell membrane. The enzyme catalyses ATP(in) = ATP(out). It carries out the reaction Ca(2+)(in) = Ca(2+)(out). The catalysed reaction is Na(+)(in) = Na(+)(out). It catalyses the reaction K(+)(in) = K(+)(out). The enzyme catalyses chloride(in) = chloride(out). Functionally, pore-forming subunit of gustatory voltage-gated ion channels required for sensory perception of sweet, bitter and umami tastes. With CALHM1 forms a fast-activating voltage-gated ATP-release channel in type II taste bud cells, ATP acting as a neurotransmitter to activate afferent neural gustatory pathways. Acts both as a voltage-gated and calcium-activated ion channel: mediates neuronal excitability in response to membrane depolarization and low extracellular Ca(2+) concentration. Has poor ion selectivity and forms a wide pore (around 14 Angstroms) that mediates permeation of small ions including Ca(2+), Na(+), K(+) and Cl(-), as well as larger ions such as ATP(4-). This is Calcium homeostasis modulator protein 3 from Homo sapiens (Human).